Here is a 247-residue protein sequence, read N- to C-terminus: Chromosome partition protein MukE (247 aa).

Positions 213 to 247 are disordered; that stretch reads AQSLQEEKNGLKDNMDQSAVENEQYFENEENEGIA. Residues 217–227 show a composition bias toward basic and acidic residues; that stretch reads QEEKNGLKDNM. Residues 236 to 247 are compositionally biased toward acidic residues; sequence QYFENEENEGIA.

It belongs to the MukE family. In terms of assembly, interacts, and probably forms a ternary complex, with MukF and MukB. The complex formation is stimulated by calcium or magnesium.

The protein localises to the cytoplasm. It localises to the nucleoid. In terms of biological role, involved in chromosome condensation, segregation and cell cycle progression. May participate in facilitating chromosome segregation by condensation DNA from both sides of a centrally located replisome during cell division. Probably acts via its interaction with MukB and MukF. The chain is Chromosome partition protein MukE from Histophilus somni (strain 2336) (Haemophilus somnus).